A 173-amino-acid polypeptide reads, in one-letter code: Peptidyl-prolyl cis-trans isomerase 3 (173 aa).

Positions 7 to 170 (FFDITIGGKA…KDCMIADCGQ (164 aa)) constitute a PPIase cyclophilin-type domain.

The protein belongs to the cyclophilin-type PPIase family. Exclusively expressed in the single anterior excretory cell.

It carries out the reaction [protein]-peptidylproline (omega=180) = [protein]-peptidylproline (omega=0). In terms of biological role, catalyzes the cis-trans isomerization of proline imidic peptide bonds in oligopeptides. Plays a role in protein folding, transport and assembly. This is Peptidyl-prolyl cis-trans isomerase 3 (cyn-3) from Caenorhabditis elegans.